The chain runs to 300 residues: uncharacterized protein (300 aa).

His274 functions as the Proton acceptor in the catalytic mechanism.

It belongs to the AB hydrolase superfamily. Monomer.

It carries out the reaction a carboxylic ester + H2O = an alcohol + a carboxylate + H(+). This is an uncharacterized protein from Bacillus subtilis (strain 168).